The primary structure comprises 726 residues: Serine/threonine-protein kinase PKH3 (726 aa).

Positions 10 to 271 constitute a Protein kinase domain; it reads FLFREELGHG…LEQIKKHKWF (262 aa). Residues 16-24 and K39 each bind ATP; that span reads LGHGSYSTV. The active-site Proton acceptor is D136. The disordered stretch occupies residues 629 to 679; sequence QDIPLPSPAKSSSNSGVSEPISKIPPRQLVSASEQSHKAKSEAHTKKANSY. Over residues 663–673 the composition is skewed to basic and acidic residues; it reads QSHKAKSEAHT.

It belongs to the protein kinase superfamily. Ser/Thr protein kinase family.

The enzyme catalyses L-seryl-[protein] + ATP = O-phospho-L-seryl-[protein] + ADP + H(+). It catalyses the reaction L-threonyl-[protein] + ATP = O-phospho-L-threonyl-[protein] + ADP + H(+). Functionally, serine/threonine-protein kinase. This is Serine/threonine-protein kinase PKH3 (PKH3) from Eremothecium gossypii (strain ATCC 10895 / CBS 109.51 / FGSC 9923 / NRRL Y-1056) (Yeast).